Here is a 376-residue protein sequence, read N- to C-terminus: Zinc finger CCCH domain-containing protein C337.12 (376 aa).

Residues 2–25 (NEQQLLENIASLAGAINQYKNEKE) are a coiled coil. Positions 60-95 (SKSTAASPPYVIPSTSSNADDANKEPEKQSTSDYVS) are disordered. Positions 80 to 89 (DANKEPEKQS) are enriched in basic and acidic residues. Residues 105–140 (KKNILEHDLQARKANLESYRAKLEKEYKTLAENKIQ) adopt a coiled-coil conformation. C3H1-type zinc fingers lie at residues 202 to 228 (SPSA…FVHE), 229 to 256 (PTRK…HELD), 257 to 283 (PRRI…HIHY), and 284 to 312 (SENA…HILQ). The segment at 347–376 (SKTAGSINPEDSGSEIGSNSLESNLDFISV) is disordered. A compositionally biased stretch (polar residues) spans 349-369 (TAGSINPEDSGSEIGSNSLES).

Its subcellular location is the nucleus. The sequence is that of Zinc finger CCCH domain-containing protein C337.12 from Schizosaccharomyces pombe (strain 972 / ATCC 24843) (Fission yeast).